A 232-amino-acid polypeptide reads, in one-letter code: Putative N-acetylmannosamine-6-phosphate 2-epimerase (232 aa).

Belongs to the NanE family.

The catalysed reaction is an N-acyl-D-glucosamine 6-phosphate = an N-acyl-D-mannosamine 6-phosphate. It functions in the pathway amino-sugar metabolism; N-acetylneuraminate degradation; D-fructose 6-phosphate from N-acetylneuraminate: step 3/5. In terms of biological role, converts N-acetylmannosamine-6-phosphate (ManNAc-6-P) to N-acetylglucosamine-6-phosphate (GlcNAc-6-P). This chain is Putative N-acetylmannosamine-6-phosphate 2-epimerase, found in Synechococcus elongatus (strain ATCC 33912 / PCC 7942 / FACHB-805) (Anacystis nidulans R2).